A 440-amino-acid chain; its full sequence is Chromosome partition protein MukF (440 aa).

The segment at 208 to 236 (LSETSGTLRELQDTLEAAGDKLQANLLRI) is leucine-zipper.

This sequence belongs to the MukF family. In terms of assembly, interacts, and probably forms a ternary complex, with MukE and MukB via its C-terminal region. The complex formation is stimulated by calcium or magnesium. It is required for an interaction between MukE and MukB.

It is found in the cytoplasm. The protein resides in the nucleoid. Involved in chromosome condensation, segregation and cell cycle progression. May participate in facilitating chromosome segregation by condensation DNA from both sides of a centrally located replisome during cell division. Not required for mini-F plasmid partitioning. Probably acts via its interaction with MukB and MukE. Overexpression results in anucleate cells. It has a calcium binding activity. In Escherichia coli O127:H6 (strain E2348/69 / EPEC), this protein is Chromosome partition protein MukF.